Consider the following 369-residue polypeptide: F-box protein UCC1 (369 aa).

The region spanning 8 to 45 (LMDLPLEIHLSLLEYVPNELRAVNKYFYVLHNHSYKEK) is the F-box domain.

As to quaternary structure, component of the SCF(UCC1) E3 ubiquitin-protein ligase complex composed of CDC53, SKP1, RBX1 and UCC1. Interacts with CIT2. Post-translationally, monoubiquitinated by UBC4.

It functions in the pathway protein modification; protein ubiquitination. Its function is as follows. Substrate recognition component of the SKP1-CUL1-F-box protein E3 ubiquitin-protein ligase complex SCF(UCC1) which mediates the ubiquitination and subsequent proteasomal degradation of target proteins. The SCF(UCC1) complex acts as a metabolic switch for the glyoxylate cycle and regulates the level of CIT2 protein to maintain citrate homeostasis. This chain is F-box protein UCC1 (UCC1), found in Saccharomyces cerevisiae (strain ATCC 204508 / S288c) (Baker's yeast).